Consider the following 465-residue polypeptide: 3-isopropylmalate dehydratase large subunit (465 aa).

Residues cysteine 347, cysteine 407, and cysteine 410 each coordinate [4Fe-4S] cluster.

This sequence belongs to the aconitase/IPM isomerase family. LeuC type 1 subfamily. In terms of assembly, heterodimer of LeuC and LeuD. [4Fe-4S] cluster is required as a cofactor.

It catalyses the reaction (2R,3S)-3-isopropylmalate = (2S)-2-isopropylmalate. The protein operates within amino-acid biosynthesis; L-leucine biosynthesis; L-leucine from 3-methyl-2-oxobutanoate: step 2/4. Catalyzes the isomerization between 2-isopropylmalate and 3-isopropylmalate, via the formation of 2-isopropylmaleate. This is 3-isopropylmalate dehydratase large subunit from Aeromonas hydrophila subsp. hydrophila (strain ATCC 7966 / DSM 30187 / BCRC 13018 / CCUG 14551 / JCM 1027 / KCTC 2358 / NCIMB 9240 / NCTC 8049).